We begin with the raw amino-acid sequence, 444 residues long: Sonic hedgehog protein (444 aa).

The N-terminal stretch at 1-24 is a signal peptide; sequence MLVATQSLLLLSFICTLVTPPGLA. A lipid anchor (N-palmitoyl cysteine) is attached at cysteine 25. The short motif at 33–39 is the Cardin-Weintraub element; that stretch reads KRRHPKK. The Ca(2+) site is built by glutamate 90, glutamate 91, aspartate 96, threonine 126, glutamate 127, aspartate 130, and aspartate 132. Zn(2+) is bound by residues histidine 141, aspartate 148, and histidine 183. Glycine 198 is lipidated: Cholesterol glycine ester. 3 repeat units span residues 386–393, 394–401, and 403–409. The tract at residues 386 to 409 is 3 X 8 AA tandem repeats of Q-V-D-L-Q-S-H-H; it reads QVDLQSHHQVDLQSHHQVDLQSHH.

Belongs to the hedgehog family. Interacts with HHATL/GUP1 which negatively regulates HHAT-mediated palmitoylation of the SHH N-terminus. Interacts with BOC and CDON. Interacts with HHIP. Interacts with DISP1 via its cholesterol anchor. Interacts with SCUBE2. As to quaternary structure, multimer. The C-terminal domain displays an autoproteolysis activity and a cholesterol transferase activity. Both activities result in the cleavage of the full-length protein and covalent attachment of a cholesterol moiety to the C-terminal of the newly generated N-terminal fragment (ShhN). Cholesterylation is required for the sonic hedgehog protein N-product targeting to lipid rafts and multimerization. ShhN is the active species in both local and long-range signaling, whereas the C-product (ShhC) is degraded in the reticulum endoplasmic. Post-translationally, N-palmitoylation by HHAT of ShhN is required for sonic hedgehog protein N-product multimerization and full activity. It is a prerequisite for the membrane-proximal positioning and the subsequent shedding of this N-terminal peptide. In terms of processing, the lipidated N- and C-terminal peptides of ShhNp can be cleaved (shedding). The N-terminal palmitoylated peptide is cleaved at the Cardin-Weintraub (CW) motif site. The cleavage reduced the interactions with heparan sulfate. The cleavage is enhanced by SCUBE2. Strongly expressed in notochord and neural floor plate during embryogenesis. In tadpole, high expression is observed in pancreas/stomach, moderate expression in tail, and low expression in intestine, brain, and hind limb.

The protein localises to the endoplasmic reticulum membrane. It is found in the golgi apparatus membrane. The protein resides in the cell membrane. It catalyses the reaction glycyl-L-cysteinyl-[protein] + cholesterol + H(+) = [protein]-C-terminal glycyl cholesterol ester + N-terminal L-cysteinyl-[protein]. The C-terminal part of the sonic hedgehog protein precursor displays an autoproteolysis and a cholesterol transferase activity. Both activities result in the cleavage of the full-length protein into two parts (ShhN and ShhC) followed by the covalent attachment of a cholesterol moiety to the C-terminal of the newly generated ShhN. Both activities occur in the endoplasmic reticulum. Once cleaved, ShhC is degraded in the endoplasmic reticulum. Functionally, the dually lipidated sonic hedgehog protein N-product (ShhNp) is a morphogen which is essential for a variety of patterning events during development. Induces ventral cell fate in the neural tube and somites. Involved in the patterning of the anterior-posterior axis of the developing limb bud. Essential for axon guidance. Binds to the patched (PTCH1) receptor, which functions in association with smoothened (SMO), to activate the transcription of target genes. In the absence of SHH, PTCH1 represses the constitutive signaling activity of SMO. This chain is Sonic hedgehog protein, found in Xenopus laevis (African clawed frog).